Reading from the N-terminus, the 602-residue chain is Cytoskeleton-associated protein 4 (602 aa).

The disordered stretch occupies residues 1-83 (MPSAKQRGSK…GGGGKSSSSS (83 aa)). Topologically, residues 1–106 (MPSAKQRGSK…SASCSRRLGR (106 aa)) are cytoplasmic. Phosphoserine occurs at positions 3, 17, and 19. At Lys21 the chain carries N6-acetyllysine. Pro residues predominate over residues 35–52 (KPPPAPQQPPPPPAPHPQ). Residues 53-64 (QHPQQHPQNQAH) are compositionally biased toward low complexity. A lipid anchor (S-palmitoyl cysteine; by ZDHHC2) is attached at Cys100. A helical membrane pass occupies residues 107–127 (ALNFLFYLALVAAAAFSGWCV). At 128–602 (HHVLEEVQQV…VKVEKIHEKV (475 aa)) the chain is on the extracellular side. Residues 130 to 214 (VLEEVQQVRR…QKLQNEILKD (85 aa)) adopt a coiled-coil conformation. Phosphoserine; by FAM20C is present on Ser232. Coiled-coil stretches lie at residues 256–460 (TEVQ…GLGS) and 533–602 (LSSL…HEKV). Ser312 is subject to Phosphoserine.

As to quaternary structure, interacts with REEP5. In terms of processing, reversibly palmitoylated. Palmitoylation at Cys-100 by ZDHHC2 is required for its trafficking from the ER to the plasma membrane and for its perinuclear localization. Palmitoylation by ZDHHC2 is also required for its function in APF-mediated antiproliferative signaling. Post-translationally, increased phosphorylation during mitosis prevents binding to microtubules.

It is found in the endoplasmic reticulum membrane. Its subcellular location is the cell membrane. It localises to the cytoplasm. The protein resides in the cytoskeleton. The protein localises to the perinuclear region. Its function is as follows. Mediates the anchoring of the endoplasmic reticulum to microtubules. In terms of biological role, high-affinity epithelial cell surface receptor for the FZD8-related low molecular weight sialoglycopeptide APF/antiproliferative factor. Mediates the APF antiproliferative signaling within cells. The chain is Cytoskeleton-associated protein 4 (CKAP4) from Homo sapiens (Human).